Consider the following 299-residue polypeptide: MKKIKCALIGPGNIGTDLLYKLRRSPVLEPVWMVGVDPASDGLARAREFGLKTTDKGVDGLLPHVVGDEIRIAFDATSAYVHRDNSDKLTALGVKMIDLTPAAIGPYCVPPVNLDAHLDSAQTNVNMVTCGGQATIPMVYAVSRVQPVAYGEIVATVSSRSVGPGTRKNIDEFTRTTSGAIEQVGGARKGKAIIVINPAEPPLIMRDTIHCLTDGPPDVDAITASVHAMVKEVQRYVPGYTLKNGPVFDGNRVSVFMEVEGLGDYLPKYAGNLDIMTAAAAATAERFAEQMLAATAATA.

Cys-130 serves as the catalytic Acyl-thioester intermediate. NAD(+) contacts are provided by residues 161–169 (SVGPGTRKN) and Asn-272.

It belongs to the acetaldehyde dehydrogenase family.

The enzyme catalyses acetaldehyde + NAD(+) + CoA = acetyl-CoA + NADH + H(+). The sequence is that of Acetaldehyde dehydrogenase 1 (mhpF) from Burkholderia cenocepacia (strain ATCC BAA-245 / DSM 16553 / LMG 16656 / NCTC 13227 / J2315 / CF5610) (Burkholderia cepacia (strain J2315)).